A 434-amino-acid chain; its full sequence is CinA-like protein (434 aa).

It belongs to the CinA family.

The polypeptide is CinA-like protein (Mycobacterium avium (strain 104)).